A 907-amino-acid chain; its full sequence is Alanine--tRNA ligase (907 aa).

4 residues coordinate Zn(2+): histidine 581, histidine 585, cysteine 683, and histidine 687.

Belongs to the class-II aminoacyl-tRNA synthetase family. Requires Zn(2+) as cofactor.

It is found in the cytoplasm. The enzyme catalyses tRNA(Ala) + L-alanine + ATP = L-alanyl-tRNA(Ala) + AMP + diphosphate. In terms of biological role, catalyzes the attachment of alanine to tRNA(Ala) in a two-step reaction: alanine is first activated by ATP to form Ala-AMP and then transferred to the acceptor end of tRNA(Ala). Also edits incorrectly charged Ser-tRNA(Ala) and Gly-tRNA(Ala) via its editing domain. The polypeptide is Alanine--tRNA ligase (Bdellovibrio bacteriovorus (strain ATCC 15356 / DSM 50701 / NCIMB 9529 / HD100)).